The following is a 222-amino-acid chain: 7-cyano-7-deazaguanine synthase (222 aa).

11-21 (FSGGQDSTTCL) contacts ATP. The Zn(2+) site is built by Cys187, Cys195, Cys198, and Cys201.

This sequence belongs to the QueC family. It depends on Zn(2+) as a cofactor.

It catalyses the reaction 7-carboxy-7-deazaguanine + NH4(+) + ATP = 7-cyano-7-deazaguanine + ADP + phosphate + H2O + H(+). Its pathway is purine metabolism; 7-cyano-7-deazaguanine biosynthesis. Catalyzes the ATP-dependent conversion of 7-carboxy-7-deazaguanine (CDG) to 7-cyano-7-deazaguanine (preQ(0)). The protein is 7-cyano-7-deazaguanine synthase of Actinobacillus pleuropneumoniae serotype 5b (strain L20).